Consider the following 350-residue polypeptide: MSQLQVRHDWKREEIEALFALPMNDLLFKAHSIHREVYDPNEVQISRLLSIKTGACPEDCKYCPQSARYDTGLEKERLLAMETVLTEARSAKAAGASRFCMGAAWRNPKDKDMPYLKQMVQEVKALGMETCMTLGMLSAEQANELADAGLDYYNHNLDTSPEYYGDVITTRTYQNRLDTLSHVRASGMKVCSGGIVGMGEKATDRAGLLQQLANLPQHPDSVPINMLVKVAGTPFEKLDDLDPLEFVRTIAVARILMPKSRVRLSAGRENMTDELQAMCFFAGANSIFYGCKLLTTPNPEESDDMGLFRRLGLRPEQGAAATIDDEQAVLAKAAAHQDKASAPFYDAAAL.

Residues 41 to 268 (NEVQISRLLS…KSRVRLSAGR (228 aa)) form the Radical SAM core domain. 3 residues coordinate [4Fe-4S] cluster: C56, C60, and C63. The [2Fe-2S] cluster site is built by C100, C131, C191, and R263.

The protein belongs to the radical SAM superfamily. Biotin synthase family. Homodimer. Requires [4Fe-4S] cluster as cofactor. [2Fe-2S] cluster is required as a cofactor.

The catalysed reaction is (4R,5S)-dethiobiotin + (sulfur carrier)-SH + 2 reduced [2Fe-2S]-[ferredoxin] + 2 S-adenosyl-L-methionine = (sulfur carrier)-H + biotin + 2 5'-deoxyadenosine + 2 L-methionine + 2 oxidized [2Fe-2S]-[ferredoxin]. The protein operates within cofactor biosynthesis; biotin biosynthesis; biotin from 7,8-diaminononanoate: step 2/2. Its function is as follows. Catalyzes the conversion of dethiobiotin (DTB) to biotin by the insertion of a sulfur atom into dethiobiotin via a radical-based mechanism. This is Biotin synthase from Shewanella sp. (strain ANA-3).